The sequence spans 179 residues: Large ribosomal subunit protein uL16 (179 aa).

The tract at residues 147-179 is disordered; the sequence is KASSASLANLDEDANSQTDDETSSSGSVATVES. Residues 156 to 168 show a composition bias toward acidic residues; sequence LDEDANSQTDDET. Positions 169–179 are enriched in polar residues; the sequence is SSSGSVATVES.

Belongs to the universal ribosomal protein uL16 family. Part of the 50S ribosomal subunit.

In terms of biological role, binds 23S rRNA and is also seen to make contacts with the A and possibly P site tRNAs. The chain is Large ribosomal subunit protein uL16 from Prochlorococcus marinus (strain MIT 9211).